Consider the following 189-residue polypeptide: uncharacterized protein (189 aa).

This is an uncharacterized protein from Saccharomyces cerevisiae (strain ATCC 204508 / S288c) (Baker's yeast).